The chain runs to 352 residues: Putative pectinesterase 11 (352 aa).

Residues 13–35 (ANYHHIIIINIFILSSITSSSMA) traverse the membrane as a helical segment. Asn76 carries an N-linked (GlcNAc...) asparagine glycan. The active-site Proton donor is Asp175. Asp196 functions as the Nucleophile in the catalytic mechanism. An N-linked (GlcNAc...) asparagine glycan is attached at Asn218. Substrate is bound by residues Arg252 and Trp254. The tract at residues 332 to 352 (LRPAPSHFKNAPKQTQNKEIN) is disordered. A compositionally biased stretch (polar residues) spans 343–352 (PKQTQNKEIN).

The protein belongs to the pectinesterase family.

The protein resides in the membrane. The enzyme catalyses [(1-&gt;4)-alpha-D-galacturonosyl methyl ester](n) + n H2O = [(1-&gt;4)-alpha-D-galacturonosyl](n) + n methanol + n H(+). The protein operates within glycan metabolism; pectin degradation; 2-dehydro-3-deoxy-D-gluconate from pectin: step 1/5. Acts in the modification of cell walls via demethylesterification of cell wall pectin. The polypeptide is Putative pectinesterase 11 (PME11) (Arabidopsis thaliana (Mouse-ear cress)).